The primary structure comprises 723 residues: Probable inactive serine/threonine-protein kinase fnkD (723 aa).

One can recognise a Protein kinase domain in the interval 33-276 (WEIITQLESN…TTSLPKYSTL (244 aa)). FNIP repeat units follow at residues 301–342 (FNQP…ELAS), 343–384 (FNQT…LLSS), 385–426 (FNQP…SLAS), 524–565 (FNQS…ILPS), 566–606 (FNHP…LGDE), and 647–690 (FNIE…FGIT).

Belongs to the protein kinase superfamily. STE Ser/Thr protein kinase family.

This Dictyostelium discoideum (Social amoeba) protein is Probable inactive serine/threonine-protein kinase fnkD (fnkD-1).